Consider the following 285-residue polypeptide: GTP-binding protein 8 (285 aa).

The EngB-type G domain maps to 110–283 (QQPEVCFIGR…KCFIADITGS (174 aa)). Residues 118 to 125 (GRSNVGKS), 147 to 151 (GHTKK), 165 to 168 (DMPG), 227 to 230 (TKID), and 262 to 264 (ISA) each bind GTP. Residues S125 and T149 each contribute to the Mg(2+) site.

Belongs to the TRAFAC class TrmE-Era-EngA-EngB-Septin-like GTPase superfamily. EngB GTPase family. Mg(2+) is required as a cofactor.

This is GTP-binding protein 8 (Gtpbp8) from Mus musculus (Mouse).